We begin with the raw amino-acid sequence, 244 residues long: tRNA (guanine-N(7)-)-methyltransferase (244 aa).

S-adenosyl-L-methionine is bound by residues E75, E100, D127, and D150. D150 is a catalytic residue. Substrate is bound by residues K154, D186, and 223-226 (TRFE).

The protein belongs to the class I-like SAM-binding methyltransferase superfamily. TrmB family.

It carries out the reaction guanosine(46) in tRNA + S-adenosyl-L-methionine = N(7)-methylguanosine(46) in tRNA + S-adenosyl-L-homocysteine. The protein operates within tRNA modification; N(7)-methylguanine-tRNA biosynthesis. In terms of biological role, catalyzes the formation of N(7)-methylguanine at position 46 (m7G46) in tRNA. The sequence is that of tRNA (guanine-N(7)-)-methyltransferase from Xylella fastidiosa (strain M23).